Reading from the N-terminus, the 953-residue chain is MHCAERLRTEERASPGLIACTAVHKPSKSTRIKPTKPHHTPSNSMESALKKDTESTCVLCCQDIDLFAVGKCDHPVCYRCSTKMRVLCEQKYCAVCREQLDKVVFLRKPEAFATLNIHHYQCEKKYDIYFGDGKVHAQFRKILLNECPHCPEPKVFSKFEELEQHMRKQHELFCCKLCLKHLKIFSYERKWYSRKDLARHRMQGDPDDTSHRGHPLCKFCDDRYLDNDELLKHLRRDHYFCHFCDADGAQEYYSDYQYLSEHFRESHYLCEEGRCSTEQFTHAFRTEIDYKAHKAAAHSKNRAEARQNRQIDIQFNYAPRQQRRNDVGGDDYEEVDRFNRQGRPGRGRGPGGQQNLRSWRYNREEEDREMAAAMRASMASHQEERSHAQERSMLKPRREEKLEPDETRNNRSTARPTNDTQARSMKSNGSLAGQDFPVLGAGAPPAPVQSMIQKPSVSLKEDDFPSLSGSVVSSPMTPAYTNQPRKHSSFQEEDFPALVSKIKPLKPQSSAASAWSQAGSKPVVAPNKPVVLPTKMTPMSSSSILSSTDPLPSASVPQPLTASSSRRKKMLTLTESHKDPPKIRCPSSSDDEDPHSGKTAQEIRTVPTMLDISTLLTVKGSSPQANPKASKKKKQTTASSLGSPSHTPETVSKMAHKENVPEKKPPETGLNKAPTAPKTNSIVNGVAEKPAEALSCTSFPENITSSKQPVTDQAPPSKEEEFPALISKKPPPGFKSAFPLRNSQSALPPPPPPGLGPAVSKPPPGFTGVPLNSNVEDSSVSAVNRPTPAIGSYLIPDHFQQRNMDLIQSIKNFLQNDETKFNEFKNYSGQFRQGALPAVQYYKSCQELLGENFNRVFNELLVLLPDTRKQQELLTAHGDFKALEKQQQGSKPKKSKKKAWQTGTSSSSSLDLDCQVCPTCKQVLALKDFNTHKTLHIGDDDFPSLQAISKIIS.

Over residues 25–39 the composition is skewed to basic residues; the sequence is KPSKSTRIKPTKPHH. The tract at residues 25–47 is disordered; it reads KPSKSTRIKPTKPHHTPSNSMES. An RING-type zinc finger spans residues 57–97; it reads CVLCCQDIDLFAVGKCDHPVCYRCSTKMRVLCEQKYCAVCR. The C2H2-type zinc-finger motif lies at 215 to 238; sequence PLCKFCDDRYLDNDELLKHLRRDH. Disordered regions lie at residues 299-779 and 884-911; these read SKNR…EDSS and EKQQ…SSLD. Low complexity predominate over residues 371–380; sequence AAAMRASMAS. The span at 381–409 shows a compositional bias: basic and acidic residues; it reads HQEERSHAQERSMLKPRREEKLEPDETRN. Composition is skewed to polar residues over residues 410 to 431 and 467 to 483; these read NRST…NGSL and LSGS…YTNQ. The residue at position 489 (Ser489) is a Phosphoserine. 2 stretches are compositionally biased toward low complexity: residues 508-518 and 536-553; these read QSSAASAWSQA and MTPM…PLPS. Composition is skewed to polar residues over residues 555-564 and 641-650; these read SVPQPLTASS and LGSPSHTPET. Residues 655–666 are compositionally biased toward basic and acidic residues; sequence AHKENVPEKKPP. Polar residues predominate over residues 695–711; that stretch reads SCTSFPENITSSKQPVT. The segment covering 747–765 has biased composition (pro residues); it reads LPPPPPPGLGPAVSKPPPG. Residues 770–779 are compositionally biased toward polar residues; it reads PLNSNVEDSS.

This sequence belongs to the ZNF598/HEL2 family.

The protein localises to the cytoplasm. It is found in the cytosol. The enzyme catalyses S-ubiquitinyl-[E2 ubiquitin-conjugating enzyme]-L-cysteine + [acceptor protein]-L-lysine = [E2 ubiquitin-conjugating enzyme]-L-cysteine + N(6)-ubiquitinyl-[acceptor protein]-L-lysine.. It functions in the pathway protein modification; protein ubiquitination. Functionally, E3 ubiquitin-protein ligase that plays a key role in the ribosome quality control (RQC), a pathway that takes place when a ribosome has stalled during translation, leading to degradation of nascent peptide chains. ZNF598 is activated when ribosomes are stalled within an mRNA following translation of prematurely polyadenylated mRNAs. Acts as a ribosome collision sensor: specifically recognizes and binds collided di-ribosome, which arises when a trailing ribosome encounters a slower leading ribosome, leading to terminally arrest translation. Following binding to colliding ribosomes, mediates monoubiquitination of 40S ribosomal proteins RPS10/eS10 and RPS3/uS3, and 'Lys-63'-linked polyubiquitination of RPS20/uS10. Polyubiquitination of RPS20/uS10 promotes recruitment of the RQT (ribosome quality control trigger) complex, which drives the disassembly of stalled ribosomes, followed by degradation of nascent peptides. This chain is E3 ubiquitin-protein ligase ZNF598, found in Danio rerio (Zebrafish).